The primary structure comprises 130 residues: Small ribosomal subunit protein uS9 (130 aa).

The disordered stretch occupies residues 111 to 130; the sequence is VERKKPGLKKARKASQFSKR. Basic residues predominate over residues 116–130; that stretch reads PGLKKARKASQFSKR.

Belongs to the universal ribosomal protein uS9 family.

The chain is Small ribosomal subunit protein uS9 from Lactococcus lactis subsp. lactis (strain IL1403) (Streptococcus lactis).